The sequence spans 233 residues: MILIASPFSLAHLEYLHTWHVTIKNIAQQHGLDIKVAIVVSTSHLNTFLPISTALNIECITFPGCGIKEIDLLWARIKLFQHYCAIGARLLWLVSADIRPPVSTWPAIADSLKKGADAVVIPYPSRWNNLIPTVIKEIVVHQKKCLVAVDARHLDTDTQIVGAGMGCIVLTLKALMVRLSIGKQPIKILWPDLHGTAEGIPLEGVEVGWFLNAYAHKLNIRCLGAEHIAQHFI.

The protein belongs to the asfivirus H233R family.

This is an uncharacterized protein from African swine fever virus (isolate Warthog/Namibia/Wart80/1980) (ASFV).